Here is a 155-residue protein sequence, read N- to C-terminus: Small ribosomal subunit protein uS7c (155 aa).

Belongs to the universal ribosomal protein uS7 family. As to quaternary structure, part of the 30S ribosomal subunit.

The protein localises to the plastid. It is found in the chloroplast. Its function is as follows. One of the primary rRNA binding proteins, it binds directly to 16S rRNA where it nucleates assembly of the head domain of the 30S subunit. The chain is Small ribosomal subunit protein uS7c (rps7) from Cabomba caroliniana (Carolina fanwort).